We begin with the raw amino-acid sequence, 154 residues long: Snaclec agglucetin subunit alpha-1 (154 aa).

Residues 1 to 23 (MGRFIFVSFGLLVVFLSLSGTGA) form the signal peptide. 3 disulfide bridges follow: Cys-27–Cys-38, Cys-55–Cys-150, and Cys-125–Cys-142. In terms of domain architecture, C-type lectin spans 34–151 (YDQSCYRVFK…CGSEYAFVCK (118 aa)). Asn-116 is a glycosylation site (N-linked (GlcNAc...) asparagine).

Belongs to the snaclec family. In terms of assembly, heterotetramer of the subunits alpha-1, alpha-2, beta-1 and beta-2; disulfide-linked. Expressed by the venom gland.

The protein resides in the secreted. Agglucetin specifically causes platelet aggregation and surface exposure of integrin alpha-IIb/beta-3 with a GPIb-(GP1BA-) dependent manner in washed platelets. It binds to human platelets in a saturable manner, and its binding is specifically blocked by anti-GP Ib mAb. It regulates endothelial cell survival and promotes angiogenesis by activating integrin alpha-v/beta-3 signaling through FAK/phosphatidylinositol 3-kinase (PI3K)/Akt pathway. The sequence is that of Snaclec agglucetin subunit alpha-1 from Deinagkistrodon acutus (Hundred-pace snake).